Here is a 250-residue protein sequence, read N- to C-terminus: MTASILAAQIEVGEHHTATWLCMTVNTDTVLSTAIAALIVLALAFYLRSKVTSTAVPGGVQLFFEAITIQMRGQVESAIGMRIAPFVLPLAVTIFVFILISNWLSVLPVQYTDEHGQTTELLKPAAADINYVLALALFVFVCYHAAGIWRRGIVGHPIKLLKGHVAILAPINLVEEIAKPISLSLRLFGNIFAGSILVALIALFPPYIMWAPNAIWKSFDLFVGAIQAFIFALLTILYFSQAMELEEDHH.

Transmembrane regions (helical) follow at residues 27–47 (TDTV…AFYL), 83–103 (IAPF…ISNW), 129–149 (INYV…AGIW), 191–211 (IFAG…IMWA), and 219–239 (FDLF…ILYF).

Belongs to the ATPase A chain family. F-type ATPases have 2 components, CF(1) - the catalytic core - and CF(0) - the membrane proton channel. CF(1) has five subunits: alpha(3), beta(3), gamma(1), delta(1), epsilon(1). CF(0) has three main subunits: a(1), b(2) and c(9-12). The alpha and beta chains form an alternating ring which encloses part of the gamma chain. CF(1) is attached to CF(0) by a central stalk formed by the gamma and epsilon chains, while a peripheral stalk is formed by the delta and b chains.

Its subcellular location is the cell membrane. Its function is as follows. Key component of the proton channel; it plays a direct role in the translocation of protons across the membrane. This chain is ATP synthase subunit a, found in Mycobacterium ulcerans (strain Agy99).